A 192-amino-acid polypeptide reads, in one-letter code: MNTDDVLAVFREAGAILEGHFILTSGLRSPVFLQKARVFMHADKTEKLCKALAEKIRAADLGPIDYVVGPAIGGLIPSYETSRHLGVPSVWVERENGVFRLRRFDVPKGARVVIVEDIVTTGLSIRETIDCMKDLGIEVVAAACIVDRSAGKADVGTRLISLAEYEVPAYPADKLPPELAAIPAVKPGSRNI.

116 to 124 (EDIVTTGLS) is a 5-phospho-alpha-D-ribose 1-diphosphate binding site. Orotate-binding residues include Thr-120 and Arg-148.

The protein belongs to the purine/pyrimidine phosphoribosyltransferase family. PyrE subfamily. Homodimer. It depends on Mg(2+) as a cofactor.

The enzyme catalyses orotidine 5'-phosphate + diphosphate = orotate + 5-phospho-alpha-D-ribose 1-diphosphate. Its pathway is pyrimidine metabolism; UMP biosynthesis via de novo pathway; UMP from orotate: step 1/2. Its function is as follows. Catalyzes the transfer of a ribosyl phosphate group from 5-phosphoribose 1-diphosphate to orotate, leading to the formation of orotidine monophosphate (OMP). This is Orotate phosphoribosyltransferase from Brucella abortus (strain S19).